A 275-amino-acid chain; its full sequence is uncharacterized protein (275 aa).

NAD(+) contacts are provided by residues Arg-20–Gln-22, Asp-41–Ile-42, Asp-80–Val-81, and Asn-107. Residue Ser-160 participates in substrate binding. The active-site Proton acceptor is Tyr-173. NAD(+) contacts are provided by residues Lys-177 and Val-206–Thr-208.

This sequence belongs to the short-chain dehydrogenases/reductases (SDR) family.

This is an uncharacterized protein from Mycolicibacterium paratuberculosis (strain ATCC BAA-968 / K-10) (Mycobacterium paratuberculosis).